Consider the following 205-residue polypeptide: Recombination protein RecR (205 aa).

Residues 58-75 form a C4-type zinc finger; sequence CSECQNVTDRDSDPCVLC. The Toprim domain maps to 83–182; it reads TVICVVESPV…AVSKIARGIP (100 aa).

The protein belongs to the RecR family.

May play a role in DNA repair. It seems to be involved in an RecBC-independent recombinational process of DNA repair. It may act with RecF and RecO. This Chlorobium phaeobacteroides (strain DSM 266 / SMG 266 / 2430) protein is Recombination protein RecR.